The primary structure comprises 149 residues: UPF0178 protein VFMJ11_0615 (149 aa).

It belongs to the UPF0178 family.

The chain is UPF0178 protein VFMJ11_0615 from Aliivibrio fischeri (strain MJ11) (Vibrio fischeri).